We begin with the raw amino-acid sequence, 431 residues long: MANSC domain-containing protein 1 (431 aa).

A signal peptide spans 1–26 (MFFGGEGSLTYTLVIICFLTLRLSAS). Residues 27 to 385 (QNCLKKSLED…QYGLPFEKWL (359 aa)) lie on the Extracellular side of the membrane. The MANSC domain occupies 33–117 (SLEDVVIDIQ…LKPAKGLMSY (85 aa)). Residues asparagine 72, asparagine 222, and asparagine 251 are each glycosylated (N-linked (GlcNAc...) asparagine). A disordered region spans residues 234-277 (SPHTTSATPKPATLLPTNASVTPSGTSQPQLATTAPPVTTVTSQ). The segment covering 248-261 (LPTNASVTPSGTSQ) has biased composition (polar residues). Positions 262–277 (PQLATTAPPVTTVTSQ) are enriched in low complexity. N-linked (GlcNAc...) asparagine glycans are attached at residues asparagine 327 and asparagine 352. The interval 352–372 (NKTASWEGREASPGSSSQGSV) is disordered. A helical membrane pass occupies residues 386–408 (LIGSLLFGVLFLVIGLVLLGRIL). Topologically, residues 409 to 431 (SESLRRKRYSRLDYLINGIYVDI) are cytoplasmic.

In terms of tissue distribution, widely expressed.

Its subcellular location is the membrane. This Homo sapiens (Human) protein is MANSC domain-containing protein 1 (MANSC1).